The chain runs to 311 residues: Probable dihydroorotate dehydrogenase A (fumarate) (311 aa).

FMN is bound by residues Ser-20 and 44–45; that span reads KT. Substrate contacts are provided by residues Lys-44, 68 to 72, and Asn-127; that span reads NSMGL. Asn-127 provides a ligand contact to FMN. Cys-130 (nucleophile) is an active-site residue. Positions 164 and 192 each coordinate FMN. 193 to 194 is a binding site for substrate; it reads NS. Residues Gly-221, 249 to 250, and 271 to 272 contribute to the FMN site; these read GG and GT.

This sequence belongs to the dihydroorotate dehydrogenase family. Type 1 subfamily. In terms of assembly, homodimer. It depends on FMN as a cofactor.

It is found in the cytoplasm. It catalyses the reaction (S)-dihydroorotate + fumarate = orotate + succinate. It participates in pyrimidine metabolism; UMP biosynthesis via de novo pathway. Catalyzes the conversion of dihydroorotate to orotate with fumarate as the electron acceptor. In Enterococcus faecalis (strain ATCC 700802 / V583), this protein is Probable dihydroorotate dehydrogenase A (fumarate) (pyrDA).